Consider the following 244-residue polypeptide: Thiol S-methyltransferase TMT1A (244 aa).

The segment at methionine 1 to tryptophan 28 is targeting to lipid droplets. A signal peptide spans methionine 1 to serine 29.

The protein belongs to the methyltransferase superfamily. (Microbial infection) Interacts with HCV non-structural protein 4B/NS4B (via C-terminal region); this interaction may promote the recruitment of NS4B in the proximity of lipid droplet. As to quaternary structure, self-associates. Interacts with SNRNP200; this interaction may promote the odontogenic differentiation. Post-translationally, methylated at lysine residues most likely by EZH2. As to expression, expressed in the liver.

The protein localises to the lipid droplet. It localises to the endoplasmic reticulum. The protein resides in the membrane. It is found in the microsome. Its subcellular location is the cytoplasm. The protein localises to the cytosol. The catalysed reaction is a thiol + S-adenosyl-L-methionine = a methyl thioether + S-adenosyl-L-homocysteine + H(+). The enzyme catalyses an adenosine in mRNA + S-adenosyl-L-methionine = an N(6)-methyladenosine in mRNA + S-adenosyl-L-homocysteine + H(+). Inhibited by 2,3-dichloro-alpha-methylbenzylamine (DCMB). In terms of biological role, thiol S-methyltransferase that catalyzes the transfer of a methyl group from S-adenosyl-L-methionine to alkyl and phenolic thiol-containing acceptor substrates. Together with TMT1B accounts for most of S-thiol methylation activity in the endoplasmic reticulum of hepatocytes. Able to methylate the N6 position of adenosine residues in long non-coding RNAs (lncRNAs). May facilitate lncRNAs transfer into exosomes at the tumor-stroma interface. Promotes osteogenic and odontogenic differentiation by regulating the expression of genes involved in stem cell differentiation and survival. Targeted from the endoplasmic reticulum to lipid droplets, where it recruits cellular proteins to form functional organelles. Functionally, (Microbial infection) May be involved in the assembly and release stages of hepatitis C virus (HCV) life cycle and thus play a crucial role in HCV propagation. This Homo sapiens (Human) protein is Thiol S-methyltransferase TMT1A.